The chain runs to 322 residues: Lipoyl synthase (322 aa).

[4Fe-4S] cluster-binding residues include Cys68, Cys73, Cys79, Cys94, Cys98, Cys101, and Ser309. One can recognise a Radical SAM core domain in the interval 80–298 (FNHGTASFMI…RVAGVEMGFS (219 aa)).

Belongs to the radical SAM superfamily. Lipoyl synthase family. It depends on [4Fe-4S] cluster as a cofactor.

It is found in the cytoplasm. The catalysed reaction is [[Fe-S] cluster scaffold protein carrying a second [4Fe-4S](2+) cluster] + N(6)-octanoyl-L-lysyl-[protein] + 2 oxidized [2Fe-2S]-[ferredoxin] + 2 S-adenosyl-L-methionine + 4 H(+) = [[Fe-S] cluster scaffold protein] + N(6)-[(R)-dihydrolipoyl]-L-lysyl-[protein] + 4 Fe(3+) + 2 hydrogen sulfide + 2 5'-deoxyadenosine + 2 L-methionine + 2 reduced [2Fe-2S]-[ferredoxin]. The protein operates within protein modification; protein lipoylation via endogenous pathway; protein N(6)-(lipoyl)lysine from octanoyl-[acyl-carrier-protein]: step 2/2. Its function is as follows. Catalyzes the radical-mediated insertion of two sulfur atoms into the C-6 and C-8 positions of the octanoyl moiety bound to the lipoyl domains of lipoate-dependent enzymes, thereby converting the octanoylated domains into lipoylated derivatives. The chain is Lipoyl synthase from Idiomarina loihiensis (strain ATCC BAA-735 / DSM 15497 / L2-TR).